We begin with the raw amino-acid sequence, 321 residues long: tRNA U34 carboxymethyltransferase (321 aa).

Carboxy-S-adenosyl-L-methionine-binding positions include K90, W104, K109, G129, 151-153, 180-181, M195, Y199, and R314; these read DPT and IE.

It belongs to the class I-like SAM-binding methyltransferase superfamily. CmoB family. Homotetramer.

It catalyses the reaction carboxy-S-adenosyl-L-methionine + 5-hydroxyuridine(34) in tRNA = 5-carboxymethoxyuridine(34) in tRNA + S-adenosyl-L-homocysteine + H(+). In terms of biological role, catalyzes carboxymethyl transfer from carboxy-S-adenosyl-L-methionine (Cx-SAM) to 5-hydroxyuridine (ho5U) to form 5-carboxymethoxyuridine (cmo5U) at position 34 in tRNAs. The sequence is that of tRNA U34 carboxymethyltransferase from Haemophilus influenzae (strain ATCC 51907 / DSM 11121 / KW20 / Rd).